Reading from the N-terminus, the 356-residue chain is Delta(7)-sterol 5(6)-desaturase (356 aa).

3 consecutive transmembrane segments (helical) span residues Leu-87–Leu-107, Gln-134–Val-154, and Trp-171–Ile-191. In terms of domain architecture, Fatty acid hydroxylase spans Phe-179–Gly-303. Residues His-192–His-196 carry the Histidine box-1 motif. Residues His-205–His-209 carry the Histidine box-2 motif. A helical transmembrane segment spans residues Tyr-235–Val-255. The short motif at His-280–His-284 is the Histidine box-3 element.

Belongs to the sterol desaturase family. It depends on Fe cation as a cofactor.

The protein resides in the endoplasmic reticulum membrane. The enzyme catalyses a Delta(7)-sterol + 2 Fe(II)-[cytochrome b5] + O2 + 2 H(+) = a Delta(5),Delta(7)-sterol + 2 Fe(III)-[cytochrome b5] + 2 H2O. The protein operates within steroid metabolism; ergosterol biosynthesis; ergosterol from zymosterol: step 3/5. In terms of biological role, catalyzes the introduction of a C-5 double bond in the B ring of ergosterol. May contribute to the regulation of ergosterol biosynthesis. This is Delta(7)-sterol 5(6)-desaturase (ERG3) from Leptosphaeria maculans (Blackleg fungus).